The following is a 103-amino-acid chain: Large ribosomal subunit protein bL21 (103 aa).

This sequence belongs to the bacterial ribosomal protein bL21 family. Part of the 50S ribosomal subunit. Contacts protein L20.

This protein binds to 23S rRNA in the presence of protein L20. The polypeptide is Large ribosomal subunit protein bL21 (Pectobacterium carotovorum subsp. carotovorum (strain PC1)).